Reading from the N-terminus, the 289-residue chain is Rhodopsin (289 aa).

The Extracellular segment spans residues 1–7; sequence YLVSPAG. Residues 8 to 32 traverse the membrane as a helical segment; that stretch reads YAALGAYMFLLILVGFPVNFLTLYV. At 33 to 44 the chain is on the cytoplasmic side; the sequence is TLEHKKLRTPLN. The helical transmembrane segment at 45–67 threads the bilayer; that stretch reads YILLNLAVADLFMVLGGFTTTMY. Residues 68–81 lie on the Extracellular side of the membrane; the sequence is TSMHGYFVLGRLGC. A disulfide bridge links cysteine 81 with cysteine 158. A helical transmembrane segment spans residues 82 to 104; it reads NLEGFFVTLGGEIALWSLVVLAI. Residues 105–107 carry the 'Ionic lock' involved in activated form stabilization motif; the sequence is ERW. At 105–123 the chain is on the cytoplasmic side; it reads ERWIGVFKSIRNFRFTEDH. The helical transmembrane segment at 124–144 threads the bilayer; that stretch reads AIMGLGFSWVMAATCAVPPLV. Topologically, residues 145–173 are extracellular; that stretch reads GWLRYIPEGMQCSCGVDYYTRAEGFNNES. Asparagine 171 carries N-linked (GlcNAc...) asparagine glycosylation. A helical membrane pass occupies residues 174 to 195; that stretch reads FVIYMFIVHFLIPLIVIFFCYG. Topologically, residues 196-223 are cytoplasmic; it reads RLLCAVKEAAAAQQESETTQRAEKEVSR. Residues 224-245 traverse the membrane as a helical segment; it reads MVVIMVIGYLVCWLPYASVAWW. Over 246 to 257 the chain is Extracellular; that stretch reads IFCNQGSEFGPI. The helical transmembrane segment at 258–279 threads the bilayer; that stretch reads FMTLPAFFAKSPAIYNPLIYIC. At lysine 267 the chain carries N6-(retinylidene)lysine. The Cytoplasmic portion of the chain corresponds to 280–289; it reads MNKQFPHCMI.

Belongs to the G-protein coupled receptor 1 family. Opsin subfamily. In terms of processing, phosphorylated on some or all of the serine and threonine residues present in the C-terminal region. Contains one covalently linked retinal chromophore.

It localises to the membrane. It is found in the cell projection. The protein localises to the cilium. Its subcellular location is the photoreceptor outer segment. Photoreceptor required for image-forming vision at low light intensity. While most salt water fish species use retinal as chromophore, most freshwater fish use 3-dehydroretinal, or a mixture of retinal and 3-dehydroretinal. Light-induced isomerization of 11-cis to all-trans retinal triggers a conformational change that activates signaling via G-proteins. Subsequent receptor phosphorylation mediates displacement of the bound G-protein alpha subunit by arrestin and terminates signaling. The chain is Rhodopsin (rho) from Leocottus kesslerii (Kessler's sculpin).